The chain runs to 372 residues: Fatty acid 2-hydroxylase (372 aa).

Positions 8-86 (AASFTSAEVQ…LEQYYVGELR (79 aa)) constitute a Cytochrome b5 heme-binding domain. Heme-binding residues include His-43 and His-69. Helical transmembrane passes span 168–188 (VWYS…WSYY) and 213–233 (SVFI…EYLI). A Fatty acid hydroxylase domain is found at 219 to 361 (FVLGMLIWTL…TKLWDYFFHT (143 aa)). Zn(2+)-binding residues include His-234, His-239, His-257, His-260, and His-261. 2 consecutive transmembrane segments (helical) span residues 268–288 (SRLV…YVFL) and 290–310 (LILP…GYVL). His-315, His-319, His-336, His-339, and His-340 together coordinate Zn(2+).

Belongs to the sterol desaturase family. SCS7 subfamily. It depends on Zn(2+) as a cofactor. As to expression, detected in oligodendrocytes (at protein level). Detected in sciatic nerve.

The protein localises to the endoplasmic reticulum membrane. The protein resides in the microsome membrane. The catalysed reaction is a 1,2-saturated fatty acid + 2 Fe(II)-[cytochrome b5] + O2 + 2 H(+) = a (R)-2-hydroxy fatty acid + 2 Fe(III)-[cytochrome b5] + H2O. The enzyme catalyses hexadecanoate + 2 Fe(II)-[cytochrome b5] + O2 + 2 H(+) = (R)-2-hydroxyhexadecanoate + 2 Fe(III)-[cytochrome b5] + H2O. It carries out the reaction octadecanoate + 2 Fe(II)-[cytochrome b5] + O2 + 2 H(+) = (R)-2-hydroxyoctadecanoate + 2 Fe(III)-[cytochrome b5] + H2O. It catalyses the reaction docosanoate + 2 Fe(II)-[cytochrome b5] + O2 + 2 H(+) = 2-hydroxydocosanoate + 2 Fe(III)-[cytochrome b5] + H2O. The catalysed reaction is tetracosanoate + 2 Fe(II)-[cytochrome b5] + O2 + 2 H(+) = (R)-2-hydroxytetracosanoate + 2 Fe(III)-[cytochrome b5] + H2O. Its pathway is lipid metabolism; fatty acid metabolism. The protein operates within sphingolipid metabolism; galactosylceramide biosynthesis. Its function is as follows. Catalyzes the hydroxylation of free fatty acids at the C-2 position to produce 2-hydroxy fatty acids, which are building blocks of sphingolipids and glycosphingolipids common in neural tissue and epidermis. FA2H is stereospecific for the production of (R)-2-hydroxy fatty acids. Plays an essential role in the synthesis of galactosphingolipids of the myelin sheath. Responsible for the synthesis of sphingolipids and glycosphingolipids involved in the formation of epidermal lamellar bodies critical for skin permeability barrier. Participates in the synthesis of glycosphingolipids and a fraction of type II wax diesters in sebaceous gland, specifically regulating hair follicle homeostasis. Involved in the synthesis of sphingolipids of plasma membrane rafts, controlling lipid raft mobility and trafficking of raft-associated proteins. This chain is Fatty acid 2-hydroxylase, found in Rattus norvegicus (Rat).